The primary structure comprises 509 residues: Membrane-bound lytic murein transglycosylase F (509 aa).

The first 40 residues, Met-1–Ser-40, serve as a signal peptide directing secretion. A non-LT domain region spans residues Arg-41–Val-280. The interval Asn-281–Leu-509 is LT domain. Glu-327 is a catalytic residue. Residues Asp-474–Ala-500 form a disordered region.

It in the N-terminal section; belongs to the bacterial solute-binding protein 3 family. The protein in the C-terminal section; belongs to the transglycosylase Slt family.

The protein localises to the cell outer membrane. It carries out the reaction Exolytic cleavage of the (1-&gt;4)-beta-glycosidic linkage between N-acetylmuramic acid (MurNAc) and N-acetylglucosamine (GlcNAc) residues in peptidoglycan, from either the reducing or the non-reducing ends of the peptidoglycan chains, with concomitant formation of a 1,6-anhydrobond in the MurNAc residue.. Functionally, murein-degrading enzyme that degrades murein glycan strands and insoluble, high-molecular weight murein sacculi, with the concomitant formation of a 1,6-anhydromuramoyl product. Lytic transglycosylases (LTs) play an integral role in the metabolism of the peptidoglycan (PG) sacculus. Their lytic action creates space within the PG sacculus to allow for its expansion as well as for the insertion of various structures such as secretion systems and flagella. In Hahella chejuensis (strain KCTC 2396), this protein is Membrane-bound lytic murein transglycosylase F.